A 421-amino-acid polypeptide reads, in one-letter code: Proton/sodium-glutamate symport protein (421 aa).

Topologically, residues 1-3 (MRK) are cytoplasmic. Residues 4–24 (IGLAWQIFIGLILGIIVGAIF) form a helical membrane-spanning segment. Residues 25-43 (YGNPKVATYLQPIGDIFLR) are Extracellular-facing. A helical transmembrane segment spans residues 44–64 (LIKMIVIPIVISSLVVGVASV). The Cytoplasmic portion of the chain corresponds to 65–77 (GDLKKLGKLGGKT). A helical transmembrane segment spans residues 78-98 (IIYFEIITTIAIVVGLLAANI). At 99–148 (FQPGTGVNMKSLEKTDIQSYVDTTNEVQHHSMVETFVNIVPKNIFESLTK) the chain is on the extracellular side. Residues 149–169 (GDMLPIIFFSVMFGLGVAAIG) traverse the membrane as a helical segment. Over 170–198 (EKGKPVLQFFQGTAEAMFYVTNQIMKFAP) the chain is Cytoplasmic. The chain crosses the membrane as a helical span at residues 199–219 (FGVFALIGVTVSKFGVESLIP). Residues 220–222 (LSK) are Extracellular-facing. Residues 223–243 (LVIVVYATMVFFIFVVLGGVA) traverse the membrane as a helical segment. Residue Lys-244 is a topological domain, cytoplasmic. Residues 245-265 (LFGINIFHIIKILKDELILAY) form a helical membrane-spanning segment. At 266–306 (STASSETVLPKIMEKMENFGCPKAITSFVIPTGYSFNLDGS) the chain is on the extracellular side. A helical transmembrane segment spans residues 307 to 327 (TLYQALAAIFIAQLYGIDMPI). Over 328–330 (SQQ) the chain is Cytoplasmic. 2 helical membrane passes run 331 to 351 (ISLL…PGVS) and 352 to 372 (FVVL…LAFI). Over 373–421 (AGIDRILDMARTAVNVIGNSLAAIIMSKWEGQYNEEKGKQYIAQLQQSA) the chain is Cytoplasmic.

It belongs to the dicarboxylate/amino acid:cation symporter (DAACS) (TC 2.A.23) family. As to quaternary structure, homotrimer.

It localises to the cell membrane. This carrier protein is part of the Na(+)-dependent, binding-protein-independent glutamate-aspartate transport system. The protein is Proton/sodium-glutamate symport protein (gltT) of Geobacillus stearothermophilus (Bacillus stearothermophilus).